Here is a 192-residue protein sequence, read N- to C-terminus: ATP-dependent Clp protease proteolytic subunit 1 (192 aa).

The Nucleophile role is filled by Ser-92. Residue His-117 is part of the active site.

It belongs to the peptidase S14 family. Fourteen ClpP subunits assemble into 2 heptameric rings which stack back to back to give a disk-like structure with a central cavity, resembling the structure of eukaryotic proteasomes.

It is found in the cytoplasm. The enzyme catalyses Hydrolysis of proteins to small peptides in the presence of ATP and magnesium. alpha-casein is the usual test substrate. In the absence of ATP, only oligopeptides shorter than five residues are hydrolyzed (such as succinyl-Leu-Tyr-|-NHMec, and Leu-Tyr-Leu-|-Tyr-Trp, in which cleavage of the -Tyr-|-Leu- and -Tyr-|-Trp bonds also occurs).. In terms of biological role, cleaves peptides in various proteins in a process that requires ATP hydrolysis. Has a chymotrypsin-like activity. Plays a major role in the degradation of misfolded proteins. The polypeptide is ATP-dependent Clp protease proteolytic subunit 1 (Chlamydia abortus (strain DSM 27085 / S26/3) (Chlamydophila abortus)).